Reading from the N-terminus, the 334-residue chain is ADP-L-glycero-D-manno-heptose-6-epimerase (334 aa).

Residues phenylalanine 11 to isoleucine 12, aspartate 32 to asparagine 33, lysine 39, lysine 54, glutamine 77 to serine 81, and asparagine 94 contribute to the NADP(+) site. Tyrosine 141 acts as the Proton acceptor in catalysis. NADP(+) is bound at residue lysine 145. Asparagine 171 is a substrate binding site. Positions 172 and 180 each coordinate NADP(+). Catalysis depends on lysine 180, which acts as the Proton acceptor. Residues arginine 182, histidine 189, phenylalanine 203–asparagine 206, arginine 216, and tyrosine 295 contribute to the substrate site.

The protein belongs to the NAD(P)-dependent epimerase/dehydratase family. HldD subfamily. In terms of assembly, homopentamer. Requires NADP(+) as cofactor.

It carries out the reaction ADP-D-glycero-beta-D-manno-heptose = ADP-L-glycero-beta-D-manno-heptose. Its pathway is nucleotide-sugar biosynthesis; ADP-L-glycero-beta-D-manno-heptose biosynthesis; ADP-L-glycero-beta-D-manno-heptose from D-glycero-beta-D-manno-heptose 7-phosphate: step 4/4. Catalyzes the interconversion between ADP-D-glycero-beta-D-manno-heptose and ADP-L-glycero-beta-D-manno-heptose via an epimerization at carbon 6 of the heptose. The protein is ADP-L-glycero-D-manno-heptose-6-epimerase of Neisseria meningitidis serogroup C / serotype 2a (strain ATCC 700532 / DSM 15464 / FAM18).